We begin with the raw amino-acid sequence, 968 residues long: RNA polymerase-associated protein RapA (968 aa).

The Helicase ATP-binding domain maps to 163–332; the sequence is EVGRRFAPRV…FARLRLLDPD (170 aa). 176–183 is an ATP binding site; it reads DEVGLGKT. The DEAH box signature appears at 278 to 281; it reads DEAH. In terms of domain architecture, Helicase C-terminal spans 491–641; that stretch reads RVDWLINFLK…AFEQTCPSGH (151 aa).

The protein belongs to the SNF2/RAD54 helicase family. RapA subfamily. Interacts with the RNAP. Has a higher affinity for the core RNAP than for the holoenzyme. Its ATPase activity is stimulated by binding to RNAP.

In terms of biological role, transcription regulator that activates transcription by stimulating RNA polymerase (RNAP) recycling in case of stress conditions such as supercoiled DNA or high salt concentrations. Probably acts by releasing the RNAP, when it is trapped or immobilized on tightly supercoiled DNA. Does not activate transcription on linear DNA. Probably not involved in DNA repair. This Shewanella sediminis (strain HAW-EB3) protein is RNA polymerase-associated protein RapA.